The following is a 76-amino-acid chain: Small integral membrane protein 7 (76 aa).

Positions 1–17 are cleaved as a signal peptide; it reads MIGDLLLFGTLLVNAGA. Residues 18–54 are Extracellular-facing; the sequence is VLNFKLKKKESQGFGDDLMTEATTGDNIREFLLSLRY. Residues 55 to 75 traverse the membrane as a helical segment; the sequence is FRIFIALWNIFMMFCMIVLFG. A topological domain (cytoplasmic) is located at residue Ser-76.

The protein belongs to the SMIM7 family.

It is found in the membrane. In Xenopus tropicalis (Western clawed frog), this protein is Small integral membrane protein 7 (smim7).